The sequence spans 212 residues: Uracil phosphoribosyltransferase (212 aa).

5-phospho-alpha-D-ribose 1-diphosphate-binding positions include R78, R103, and 130 to 138; that span reads DPMLATGGS. Uracil contacts are provided by residues I193 and 198-200; that span reads GDA. 5-phospho-alpha-D-ribose 1-diphosphate is bound at residue D199.

It belongs to the UPRTase family. The cofactor is Mg(2+).

It catalyses the reaction UMP + diphosphate = 5-phospho-alpha-D-ribose 1-diphosphate + uracil. Its pathway is pyrimidine metabolism; UMP biosynthesis via salvage pathway; UMP from uracil: step 1/1. Allosterically activated by GTP. Functionally, catalyzes the conversion of uracil and 5-phospho-alpha-D-ribose 1-diphosphate (PRPP) to UMP and diphosphate. In Pseudomonas paraeruginosa (strain DSM 24068 / PA7) (Pseudomonas aeruginosa (strain PA7)), this protein is Uracil phosphoribosyltransferase.